The following is a 470-amino-acid chain: Poly(A) polymerase catalytic subunit (470 aa).

Residues Asp-192 and Asp-194 contribute to the active site.

It belongs to the poxviridae poly(A) polymerase catalytic subunit family. As to quaternary structure, heterodimer of a large (catalytic) subunit and a small (regulatory) subunit.

It carries out the reaction RNA(n) + ATP = RNA(n)-3'-adenine ribonucleotide + diphosphate. Its function is as follows. Polymerase that creates the 3'-poly(A) tail of mRNA's. This Sus scrofa (Pig) protein is Poly(A) polymerase catalytic subunit (PAPL).